A 159-amino-acid chain; its full sequence is Dihydrofolate reductase (159 aa).

In terms of domain architecture, DHFR spans 2 to 157 (TLSILVAHDL…IPHTFLHLIR (156 aa)). Position 6 to 8 (6 to 8 (LVA)) interacts with substrate. Residues 7-8 (VA) and 15-20 (IGFENQ) each bind NADP(+). Substrate is bound at residue Asp-28. Residue 44 to 47 (GRKT) coordinates NADP(+). Arg-58 serves as a coordination point for substrate. NADP(+)-binding positions include 63–66 (LTSD) and 93–98 (FGGQTL). A substrate-binding site is contributed by Thr-112.

This sequence belongs to the dihydrofolate reductase family.

The catalysed reaction is (6S)-5,6,7,8-tetrahydrofolate + NADP(+) = 7,8-dihydrofolate + NADPH + H(+). Its pathway is cofactor biosynthesis; tetrahydrofolate biosynthesis; 5,6,7,8-tetrahydrofolate from 7,8-dihydrofolate: step 1/1. In terms of biological role, key enzyme in folate metabolism. Catalyzes an essential reaction for de novo glycine and purine synthesis, and for DNA precursor synthesis. The protein is Dihydrofolate reductase (folA) of Staphylococcus aureus (strain COL).